Reading from the N-terminus, the 583-residue chain is Threonine--tRNA ligase (583 aa).

The tract at residues 185–478 (DHRKLGRELD…LVEHYGGAFP (294 aa)) is catalytic. Zn(2+)-binding residues include Cys278, His329, and His455.

It belongs to the class-II aminoacyl-tRNA synthetase family. As to quaternary structure, homodimer. It depends on Zn(2+) as a cofactor.

Its subcellular location is the cytoplasm. The enzyme catalyses tRNA(Thr) + L-threonine + ATP = L-threonyl-tRNA(Thr) + AMP + diphosphate + H(+). Functionally, catalyzes the attachment of threonine to tRNA(Thr) in a two-step reaction: L-threonine is first activated by ATP to form Thr-AMP and then transferred to the acceptor end of tRNA(Thr). Also edits incorrectly charged L-seryl-tRNA(Thr). This Borrelia hermsii (strain HS1 / DAH) protein is Threonine--tRNA ligase.